Reading from the N-terminus, the 892-residue chain is Alanine--tRNA ligase (892 aa).

Zn(2+) is bound by residues His-594, His-598, Cys-702, and His-706.

The protein belongs to the class-II aminoacyl-tRNA synthetase family. Zn(2+) is required as a cofactor.

It localises to the cytoplasm. It carries out the reaction tRNA(Ala) + L-alanine + ATP = L-alanyl-tRNA(Ala) + AMP + diphosphate. Functionally, catalyzes the attachment of alanine to tRNA(Ala) in a two-step reaction: alanine is first activated by ATP to form Ala-AMP and then transferred to the acceptor end of tRNA(Ala). Also edits incorrectly charged Ser-tRNA(Ala) and Gly-tRNA(Ala) via its editing domain. The polypeptide is Alanine--tRNA ligase (Pyrobaculum neutrophilum (strain DSM 2338 / JCM 9278 / NBRC 100436 / V24Sta) (Thermoproteus neutrophilus)).